The chain runs to 262 residues: MIDKSAFVHPTAIVEEGASIGANAHIGPFCIVGPHVEIGEGTVLKSHVVVNGHTKIGRDNEIYQFASIGEVNQDLKYAGEPTRVEIGDRNRIRESVTIHRGTVQGGGLTKVGSDNLLMINAHIAHDCTVGNRCILANNATLAGHVSVDDFAIIGGMAAVHQFCIIGAHVMVGGCSGVAQDVPPYVIAQGNHATPFGVNIEGLKRRGFSREAITAIRNAYKLIYRSGKTLDEVKPEIAELAETYPEVKAFTDFFARSTRGLIR.

Belongs to the transferase hexapeptide repeat family. LpxA subfamily. As to quaternary structure, homotrimer.

It localises to the cytoplasm. The enzyme catalyses a (3R)-hydroxyacyl-[ACP] + UDP-N-acetyl-alpha-D-glucosamine = a UDP-3-O-[(3R)-3-hydroxyacyl]-N-acetyl-alpha-D-glucosamine + holo-[ACP]. It functions in the pathway glycolipid biosynthesis; lipid IV(A) biosynthesis; lipid IV(A) from (3R)-3-hydroxytetradecanoyl-[acyl-carrier-protein] and UDP-N-acetyl-alpha-D-glucosamine: step 1/6. Functionally, involved in the biosynthesis of lipid A, a phosphorylated glycolipid that anchors the lipopolysaccharide to the outer membrane of the cell. The chain is Acyl-[acyl-carrier-protein]--UDP-N-acetylglucosamine O-acyltransferase from Escherichia coli O157:H7.